The primary structure comprises 200 residues: MTYVLALTGGIATGKSTADQFFKNKNIPVVDCDQIAHDLMKPKNASWQAIKDNFGTEYLNSDQTINRKKLGQLVFSDPTALNKLNQLTHPLIFDKTIQKIKMYQDKDIVILDAPVYFESNLDKKKIANGVLVITLPEATQINRLKQRNNLTDEEAKMRIKSQMPLNKKAQMADFVIANTGTIEELENKLEQLLIKIKEEG.

A DPCK domain is found at 4–200 (VLALTGGIAT…QLLIKIKEEG (197 aa)). ATP is bound at residue 12-17 (ATGKST).

The protein belongs to the CoaE family.

It is found in the cytoplasm. The enzyme catalyses 3'-dephospho-CoA + ATP = ADP + CoA + H(+). Its pathway is cofactor biosynthesis; coenzyme A biosynthesis; CoA from (R)-pantothenate: step 5/5. Catalyzes the phosphorylation of the 3'-hydroxyl group of dephosphocoenzyme A to form coenzyme A. The protein is Dephospho-CoA kinase of Lactobacillus acidophilus (strain ATCC 700396 / NCK56 / N2 / NCFM).